The following is a 265-amino-acid chain: Pre-protein VI (265 aa).

The propeptide occupies 1–33 (MEDINFSSLAPRHGTRPYMGTWNEIGTSQLNGG). The tract at residues 34–54 (AFNWNSIWSGLKNFGSTIKTY) is amphipathic alpha-helix essential for membrane lytic activity. The involved in endosomal membrane lysis stretch occupies residues 36–53 (NWNSIWSGLKNFGSTIKT). Residues 48–74 (GSTIKTYGTKAWNSQTGQMLRDKLKDQ) are interaction with hexon protein. The Nuclear export signal signature appears at 67 to 76 (LRDKLKDQNF). Positions 123 to 155 (LETVPGSVPTKGEKRPRPDAEETLVTHTTEPPS) are disordered. The segment covering 133–142 (KGEKRPRPDA) has biased composition (basic and acidic residues). The Nuclear localization signal motif lies at 136 to 140 (KRPRP). Phosphothreonine; by host is present on threonine 148. The short motif at 153 to 156 (PPSY) is the PPXY motif element. Residues 246 to 257 (STLNSIVGLGVK) carry the Nuclear export signal motif. The segment at 248–254 (LNSIVGL) is interaction with hexon protein. Residues 255-265 (GVKSLKRRRCY) are binds to importin alpha/beta, involved in hexon nuclear import. The Nuclear localization signal signature appears at 260–263 (KRRR).

It belongs to the adenoviridae protein VI family. In terms of assembly, interacts with hexon protein; this interaction allows nuclear import of hexon trimers and possibly pre-capsid assembly. Interacts (via C-terminal NLS) with importin alpha/beta. As to quaternary structure, interacts (via PPxY motif) with host NEDD4 ubiquitine ligase; this interaction might play a role in virus intracellular transport during entry. Part of a complex composed of the core-capsid bridging protein, the endosome lysis protein VI and the hexon-linking protein VIII; these interactions bridge the virus core to the capsid. Interacts with peripentonal hexons; this interaction stabilizes the capsid by gluing two peripentonal hexons together and joining them with an adjacent group-of-nine hexon. Heterodimer with the viral protease; disulfide-linked. Interacts with the viral protease. Ubiquitinated by Nedd4 following partial capsid disassembly; which might play a role in intracellular virus movement during entry. Post-translationally, contains the major nuclear import and export signals. Proteolytically removed during virion maturation. The processing of the C-terminus turns the precursor into a mature viral structural protein and abrogates its ability to promote hexon import and act as a potential chaperone protein.

It localises to the host nucleus. The protein localises to the host cytoplasm. The protein resides in the virion. Functionally, during virus assembly, promotes hexon trimers nuclear import through nuclear pore complexes via an importin alpha/beta-dependent mechanism. By analogy to herpesviruses capsid assembly, might act as a chaperone to promote the formation of the icosahedral capsid. In terms of biological role, structural component of the virion that provides increased stability to the particle shell through its interaction with the core-capsid bridging protein and the hexon-linking protein VIII. Fibers shedding during virus entry into host cell allows the endosome lysis protein to be exposed as a membrane-lytic peptide. Exhibits pH-independent membrane fragmentation activity and probably mediates viral rapid escape from host endosome via organellar membrane lysis. It is not clear if it then remains partially associated with the capsid and involved in the intracellular microtubule-dependent transport of capsid to the nucleus, or if it is lost during endosomal penetration. Cofactor that activates the viral protease. Binds to viral protease in a 1:1 ratio. The protein is Pre-protein VI of Human adenovirus A serotype 12 (HAdV-12).